The following is a 130-amino-acid chain: Protein YchQ (130 aa).

Residues 1 to 9 are Periplasmic-facing; the sequence is MTSFSTLLS. A helical transmembrane segment spans residues 10–28; it reads VHLISIALSVGLLTLRFWL. At 29 to 39 the chain is on the cytoplasmic side; sequence RYQKHPQAFAR. A helical membrane pass occupies residues 40–59; it reads WTRIVPPVVDTLLLLSGIAL. The Periplasmic portion of the chain corresponds to 60–73; sequence MAKAHILPFSGQAQ. The helical transmembrane segment at 74-93 threads the bilayer; sequence WLTEKLFGVIIYIVLGFIAL. Topologically, residues 94–104 are cytoplasmic; it reads DYRRMHSQQAR. The chain crosses the membrane as a helical span at residues 105–124; sequence IIAFPLALVVLYIIIKLATT. Over 125–130 the chain is Periplasmic; it reads KVPLLG.

The protein belongs to the SirB2 family.

The protein localises to the cell inner membrane. This chain is Protein YchQ (ychQ), found in Escherichia coli (strain K12).